Reading from the N-terminus, the 540-residue chain is Growth factor receptor-bound protein 14 (540 aa).

At Thr2 the chain carries N-acetylthreonine. Gln9 is modified (phosphothreonine). In terms of domain architecture, Ras-associating spans 106-192; that stretch reads KKQVIKVYSE…NKLYFRKNYA (87 aa). Positions 234–342 constitute a PH domain; it reads YPEIHGFLHA…WVTAIRLLKY (109 aa). 2 positions are modified to phosphoserine: Ser372 and Ser375. In terms of domain architecture, SH2 spans 439 to 535; sequence WFHHKISRDE…VLPCKLKHYC (97 aa).

The protein belongs to the GRB7/10/14 family. Interacts with the cytoplasmic domain of the autophosphorylated insulin receptor (INSR), through the SH2 domain. Interacts with GRB14 (via BPS domain); this interaction protects the tyrosines in the activation loop on INSR from dephosphorylation. Binds to the ankyrin repeat region of TNKS2 via its N-terminus. Interacts with activated NRAS. Interacts (via SH2 domain) with TEK/TIE2 (tyrosine phosphorylated). In terms of processing, phosphorylated on serine residues. Phosphorylated on tyrosine residues by TEK/TIE2. In terms of tissue distribution, expressed at high levels in the liver, kidney, pancreas, testis, ovary, heart and skeletal muscle.

The protein resides in the cytoplasm. It localises to the endosome membrane. In terms of biological role, adapter protein which modulates coupling of cell surface receptor kinases with specific signaling pathways. Binds to, and suppresses signals from, the activated insulin receptor (INSR). Potent inhibitor of insulin-stimulated MAPK3 phosphorylation. Plays a critical role regulating PDPK1 membrane translocation in response to insulin stimulation and serves as an adapter protein to recruit PDPK1 to activated insulin receptor, thus promoting PKB/AKT1 phosphorylation and transduction of the insulin signal. The protein is Growth factor receptor-bound protein 14 (GRB14) of Homo sapiens (Human).